The sequence spans 353 residues: Ornithine racemase (353 aa).

K35 functions as the Proton acceptor in the catalytic mechanism. K35 carries the N6-(pyridoxal phosphate)lysine modification. Residue R128 participates in substrate binding.

The protein belongs to the alanine racemase family. As to quaternary structure, homodimer. Pyridoxal 5'-phosphate serves as cofactor.

It carries out the reaction L-ornithine = D-ornithine. In terms of biological role, involved in the ornithine fermentation pathway. Catalyzes the conversion of L-ornithine to D-ornithine. OR could also racemize basic amino acids such as lysine and arginine. Serine, asparagine and alanine could be also converted by OR, but at a lower rate. This chain is Ornithine racemase, found in Acetoanaerobium sticklandii (strain ATCC 12662 / DSM 519 / JCM 1433 / CCUG 9281 / NCIMB 10654 / HF) (Clostridium sticklandii).